The sequence spans 108 residues: MFMAENRLQLQKGSAEETIERFYNRQGIETIEGFQQMFVTKTLNTKDTDEVKILTIWESEDSFNNWLNSDVFKEAHKNVRLKSDDDGQQSPILSNKVFKYDIGYHYQK.

Residues 2–93 form the ABM domain; sequence FMAENRLQLQ…DDDGQQSPIL (92 aa). N6 contacts Fe cation. Residues 21 to 28 and H76 each bind heme; that span reads RFYNRQGI.

It belongs to the antibiotic biosynthesis monooxygenase family. Heme-degrading monooxygenase IsdG subfamily. Homodimer.

The protein localises to the cytoplasm. The catalysed reaction is heme b + 5 AH2 + 4 O2 + 2 H(+) = delta-staphylobilin + Fe(2+) + formaldehyde + 5 A + 4 H2O. The enzyme catalyses heme b + 5 AH2 + 4 O2 + 2 H(+) = beta-staphylobilin + Fe(2+) + formaldehyde + 5 A + 4 H2O. In terms of biological role, allows bacterial pathogens to use the host heme as an iron source. Catalyzes the oxidative degradation of the heme macrocyclic porphyrin ring to the oxo-bilirubin chromophore staphylobilin (a mixture of the linear tetrapyrroles 5-oxo-delta-bilirubin and 15-oxo-beta-bilirubin) in the presence of a suitable electron donor such as ascorbate or NADPH--cytochrome P450 reductase, with subsequent release of free iron. In Staphylococcus aureus (strain MRSA252), this protein is Heme oxygenase (staphylobilin-producing) 2 (isdI).